Consider the following 444-residue polypeptide: Protein translocase subunit SecY (444 aa).

Helical transmembrane passes span 24 to 44 (FFVI…IPGI), 77 to 97 (ILAL…LLTV), 123 to 143 (GTLV…PNMV), 153 to 173 (MFTL…MWLG), 181 to 201 (IGNG…PKAI), 215 to 235 (VLLL…VVFM), 269 to 289 (MAGV…GTLA), 318 to 338 (YVML…ALVF), 376 to 396 (LAGA…MVAW), and 400 to 420 (FYFG…FMAQ).

The protein belongs to the SecY/SEC61-alpha family. In terms of assembly, component of the Sec protein translocase complex. Heterotrimer consisting of SecY, SecE and SecG subunits. The heterotrimers can form oligomers, although 1 heterotrimer is thought to be able to translocate proteins. Interacts with the ribosome. Interacts with SecDF, and other proteins may be involved. Interacts with SecA.

The protein resides in the cell inner membrane. In terms of biological role, the central subunit of the protein translocation channel SecYEG. Consists of two halves formed by TMs 1-5 and 6-10. These two domains form a lateral gate at the front which open onto the bilayer between TMs 2 and 7, and are clamped together by SecE at the back. The channel is closed by both a pore ring composed of hydrophobic SecY resides and a short helix (helix 2A) on the extracellular side of the membrane which forms a plug. The plug probably moves laterally to allow the channel to open. The ring and the pore may move independently. The protein is Protein translocase subunit SecY of Vibrio cholerae serotype O1 (strain ATCC 39315 / El Tor Inaba N16961).